The chain runs to 415 residues: Peptide chain release factor subunit 1-1 (415 aa).

This sequence belongs to the eukaryotic release factor 1 family. As to quaternary structure, heterodimer of two subunits, one of which binds GTP.

The protein resides in the cytoplasm. In terms of biological role, directs the termination of nascent peptide synthesis (translation) in response to the termination codons UAA, UAG and UGA. This chain is Peptide chain release factor subunit 1-1, found in Methanosarcina acetivorans (strain ATCC 35395 / DSM 2834 / JCM 12185 / C2A).